The primary structure comprises 308 residues: Phosphoribosylaminoimidazole-succinocarboxamide synthase (308 aa).

The protein belongs to the SAICAR synthetase family.

It catalyses the reaction 5-amino-1-(5-phospho-D-ribosyl)imidazole-4-carboxylate + L-aspartate + ATP = (2S)-2-[5-amino-1-(5-phospho-beta-D-ribosyl)imidazole-4-carboxamido]succinate + ADP + phosphate + 2 H(+). Its pathway is purine metabolism; IMP biosynthesis via de novo pathway; 5-amino-1-(5-phospho-D-ribosyl)imidazole-4-carboxamide from 5-amino-1-(5-phospho-D-ribosyl)imidazole-4-carboxylate: step 1/2. The protein is Phosphoribosylaminoimidazole-succinocarboxamide synthase of Xanthomonas euvesicatoria pv. vesicatoria (strain 85-10) (Xanthomonas campestris pv. vesicatoria).